The following is a 617-amino-acid chain: Chitin elicitor receptor kinase 1 (617 aa).

A signal peptide spans 1 to 23; it reads MKLKISLIAPILLLFSFFFAVES. Residues 24–232 lie on the Extracellular side of the membrane; that stretch reads KCRTSCPLAL…KSSKQDGVGA (209 aa). 3 cysteine pairs are disulfide-bonded: C25–C93, C29–C155, and C91–C153. N40, N52, and N102 each carry an N-linked (GlcNAc...) asparagine glycan. The LysM 1; degenerate domain occupies 46–74; sequence VINQNLNSSIAPYDQINFDPILRYNSNIK. Residues 108–140 enclose the LysM 2; degenerate domain; sequence RQEDTYERVAISNYANLTTMESLQARNPFPATN. A chitin-binding site is contributed by 109–115; that stretch reads QEDTYER. An N-linked (GlcNAc...) asparagine glycan is attached at N123. A chitin-binding site is contributed by 137–143; the sequence is PATNIPL. N152 carries an N-linked (GlcNAc...) asparagine glycan. The region spanning 168 to 211 is the LysM 3 domain; that stretch reads VTYPLRPEDSLSSIARSSGVSADILQRYNPGVNFNSGNGIVYVP. Residues 233–253 form a helical membrane-spanning segment; the sequence is GVIAGIVIGVIVALLLILFIV. Residues 254–617 are Cytoplasmic-facing; that stretch reads YYAYRKNKSK…EDLVSLMSGR (364 aa). Phosphoserine is present on residues S266, S268, and S274. Positions 322-594 constitute a Protein kinase domain; that stretch reads FNLSFKIGQG…YIVVALSTLF (273 aa). ATP-binding positions include 328-336 and K349; that span reads IGQGGFGAV. Position 390 is a phosphotyrosine (Y390). The Proton acceptor role is filled by D441. 2 positions are modified to phosphothreonine: T479 and T519.

Belongs to the protein kinase superfamily. Ser/Thr protein kinase family. As to quaternary structure, forms homodimers and homooligomers. Homodimerization is required to trigger plant defenses. Binds to chitin, chitosan and chito-oligomer oligosaccharide elicitors. Interaction with chitin octamer (NAG(8)) promotes homodimerization while shorter chitin oligomers inhibit homodimerization. Interacts with Pseudomonas syringae hopAB2/avrPtoB. Interacts (preferentially when unphosphorylated) with PBL27 at the plasma membrane. Binds to IOS1. Autophosphorylated. Autophosphorylation is induced by chitin and derivatives. In terms of processing, ubiquitinated and targeted to the proteasome by hopAB2/avrPtoB of Pseudomonas syringae pv. tomato DC3000. As to expression, expressed ubiquitously, with lowest expression in pollen.

It is found in the cell membrane. The enzyme catalyses L-seryl-[protein] + ATP = O-phospho-L-seryl-[protein] + ADP + H(+). The catalysed reaction is L-threonyl-[protein] + ATP = O-phospho-L-threonyl-[protein] + ADP + H(+). With respect to regulation, activated by chitin-mediated homodimerization. Its function is as follows. Lysin motif (LysM) receptor kinase that functions as a cell surface receptor in chitin elicitor (chitooligosaccharides) signaling leading to innate immunity toward both biotic and abiotic stresses (e.g. tolerance to salinity, heavy-metal stresses, and Botrytis cinerea infection). Recognizes microbe-derived N-acetylglucosamine (NAG)-containing ligands. Involved in the resistance to pathogenic fungi Alternaria brassicicola and Erysiphe cichoracearum, probably by sensing microbe-associated molecular patterns (MAMP) and pathogen-associated molecular patterns (PAMP). Plays an essential role in detecting peptidoglycans (e.g. PGNs) and restricting bacterial growth. Target of the bacterial type III effector E3-ligase protein hopAB2/avrPtoB of Pseudomonas syringae pv. tomato DC3000 that mediates ubiquitination and subsequent proteolysis, thus blocking all defense responses by suppressing PAMP-triggered immunity (PTI). Mediates chitin-induced phosphorylation of PBL27. The polypeptide is Chitin elicitor receptor kinase 1 (CERK1) (Arabidopsis thaliana (Mouse-ear cress)).